We begin with the raw amino-acid sequence, 205 residues long: Guanylate kinase (205 aa).

Residues 19–197 form the Guanylate kinase-like domain; that stretch reads PKLFTISAPA…AYRVLKSIFI (179 aa). Residue 26-33 participates in ATP binding; it reads APAGVGKT.

The protein belongs to the guanylate kinase family.

The protein resides in the cytoplasm. The enzyme catalyses GMP + ATP = GDP + ADP. Essential for recycling GMP and indirectly, cGMP. This chain is Guanylate kinase (gmk), found in Chlamydia pneumoniae (Chlamydophila pneumoniae).